We begin with the raw amino-acid sequence, 104 residues long: L-rhamnose mutarotase (104 aa).

Residue Y18 coordinates substrate. Catalysis depends on H22, which acts as the Proton donor. Residues Y41 and 76 to 77 (WW) contribute to the substrate site.

This sequence belongs to the rhamnose mutarotase family. Homodimer.

The protein resides in the cytoplasm. The catalysed reaction is alpha-L-rhamnose = beta-L-rhamnose. It functions in the pathway carbohydrate metabolism; L-rhamnose metabolism. Involved in the anomeric conversion of L-rhamnose. The polypeptide is L-rhamnose mutarotase (Salmonella agona (strain SL483)).